Here is a 301-residue protein sequence, read N- to C-terminus: MRIAILSQGPELYSTKRLVEAAQLRGHEVHVINPLECYMNINMRQSSIHIGGRELPAFDAVIPRIGASITFYGSAVLRQFEMMGVYALNDSVGISRSRDKLRSMQLMSRRGIGLPITGFANKPSDIPDLIDMVGGAPLVIKLLEGTQGIGVVLAETRKAAESVIEAFMGLKANIMVQEYIKEANGADIRCFVLGDKVIAAMKRQAMPGEFRSNLHRGGTASLVKLTPEERSVAIRAAKTMGLNVAGVDLLRSNHGPVIMEVNSSPGLEGIEGATTKDVAGAIIDFVEKNAIKVKKVTQAQG.

The 184-residue stretch at 104–287 (MQLMSRRGIG…VAGAIIDFVE (184 aa)) folds into the ATP-grasp domain. Residues Lys-141, 178–179 (EY), Asp-187, and 211–213 (RSN) each bind ATP. Residues Asp-248, Glu-260, and Asn-262 each coordinate Mg(2+). Mn(2+) is bound by residues Asp-248, Glu-260, and Asn-262.

This sequence belongs to the RimK family. Requires Mg(2+) as cofactor. Mn(2+) is required as a cofactor.

This Shewanella baltica (strain OS185) protein is Probable alpha-L-glutamate ligase 1.